Consider the following 341-residue polypeptide: Glycerol-3-phosphate dehydrogenase [NAD(P)+] (341 aa).

Residues Ser11, Trp12, Arg33, and Lys106 each contribute to the NADPH site. 3 residues coordinate sn-glycerol 3-phosphate: Lys106, Gly137, and Ser139. Ala141 lines the NADPH pocket. Residues Lys192, Asp245, Ser255, Arg256, and Asn257 each coordinate sn-glycerol 3-phosphate. Lys192 serves as the catalytic Proton acceptor. Residue Arg256 participates in NADPH binding. NADPH contacts are provided by Val280 and Glu282.

Belongs to the NAD-dependent glycerol-3-phosphate dehydrogenase family.

The protein localises to the cytoplasm. The catalysed reaction is sn-glycerol 3-phosphate + NAD(+) = dihydroxyacetone phosphate + NADH + H(+). The enzyme catalyses sn-glycerol 3-phosphate + NADP(+) = dihydroxyacetone phosphate + NADPH + H(+). The protein operates within membrane lipid metabolism; glycerophospholipid metabolism. Its function is as follows. Catalyzes the reduction of the glycolytic intermediate dihydroxyacetone phosphate (DHAP) to sn-glycerol 3-phosphate (G3P), the key precursor for phospholipid synthesis. This chain is Glycerol-3-phosphate dehydrogenase [NAD(P)+], found in Bacillus cytotoxicus (strain DSM 22905 / CIP 110041 / 391-98 / NVH 391-98).